The chain runs to 662 residues: 72 kDa type IV collagenase (662 aa).

Positions 1–29 (MEARLVWGVLVGPLRVLCVLCCLLGHAIA) are cleaved as a signal peptide. Positions 30 to 109 (APSPIIKFPG…PRCGNPDVAN (80 aa)) are cleaved as a propeptide — activation peptide. Residues 100–107 (PRCGNPDV) carry the Cysteine switch motif. Zn(2+) is bound at residue C102. Positions 110-221 (YNFFPRKPKW…LWTLGEGQVV (112 aa)) are collagenase-like 1. Residues D134 and D168 each contribute to the Ca(2+) site. Zn(2+) contacts are provided by H178 and D180. Residues D185 and G186 each coordinate Ca(2+). Position 193 (H193) interacts with Zn(2+). Residues G200, G202, and D204 each contribute to the Ca(2+) site. A Zn(2+)-binding site is contributed by H206. 3 residues coordinate Ca(2+): D208, D209, and E211. A collagen-binding region spans residues 222-396 (RVKYGNADGE…WGFCPDQGYS (175 aa)). Fibronectin type-II domains are found at residues 228-276 (ADGE…FCPH), 286-334 (GDGQ…FCPE), and 344-392 (SEGA…FCPD). 6 disulfides stabilise this stretch: C233-C259, C247-C274, C291-C317, C305-C332, C349-C375, and C363-C390. Residues 397 to 467 (LFLVAAHEFG…GPTPTLGPVT (71 aa)) are collagenase-like 2. A Zn(2+)-binding site is contributed by H403. E404 is a catalytic residue. Residues H407 and H413 each contribute to the Zn(2+) site. Residues 414-662 (SQDPGALMAP…GSIKSDWLGC (249 aa)) are required for inhibitor TIMP2 binding. C471 and C662 are disulfide-bonded. Hemopexin repeat units follow at residues 474 to 518 (DIVF…WPEL), 519 to 565 (PEKI…GLPP), 567 to 615 (VQQV…WNAI), and 616 to 662 (PDNL…WLGC). Residues D478, D523, and D571 each contribute to the Ca(2+) site. The N-linked (GlcNAc...) asparagine glycan is linked to N575. D620 lines the Ca(2+) pocket. N644 is a glycosylation site (N-linked (GlcNAc...) asparagine).

The protein belongs to the peptidase M10A family. As to quaternary structure, interacts (via the C-terminal hemopexin-like domains-containing region) with the integrin alpha-V/beta-3; the interaction promotes vascular invasion in angiogenic vessels and melamoma cells. Interacts (via the C-terminal PEX domain) with TIMP2 (via the C-terminal); the interaction inhibits the degradation activity. Interacts with GSK3B. It depends on Ca(2+) as a cofactor. Requires Zn(2+) as cofactor. In terms of processing, phosphorylation on multiple sites modulates enzymatic activity. Phosphorylated by PKC in vitro. The propeptide is processed by MMP14 (MT-MMP1) and MMP16 (MT-MMP3). Autocatalytic cleavage in the C-terminal produces the anti-angiogenic peptide, PEX. This processing appears to be facilitated by binding integrin integrinv/beta3.

The protein resides in the secreted. The protein localises to the extracellular space. Its subcellular location is the extracellular matrix. It localises to the membrane. It is found in the nucleus. It carries out the reaction Cleavage of gelatin type I and collagen types IV, V, VII, X. Cleaves the collagen-like sequence Pro-Gln-Gly-|-Ile-Ala-Gly-Gln.. In terms of biological role, ubiquitinous metalloproteinase that is involved in diverse functions such as remodeling of the vasculature, angiogenesis, tissue repair, tumor invasion, inflammation, and atherosclerotic plaque rupture. As well as degrading extracellular matrix proteins, can also act on several nonmatrix proteins such as big endothelial 1 and beta-type CGRP promoting vasoconstriction. Also cleaves KISS at a Gly-|-Leu bond. Appears to have a role in myocardial cell death pathways. Contributes to myocardial oxidative stress by regulating the activity of GSK3beta. Cleaves GSK3beta in vitro. Involved in the formation of the fibrovascular tissues. Its function is as follows. PEX, the C-terminal non-catalytic fragment of MMP2, possesses anti-angiogenic and anti-tumor properties and inhibits cell migration and cell adhesion to FGF2 and vitronectin. Ligand for integrin alpha-v/beta3 on the surface of blood vessels. The protein is 72 kDa type IV collagenase (Mmp2) of Rattus norvegicus (Rat).